We begin with the raw amino-acid sequence, 429 residues long: 3-phosphoshikimate 1-carboxyvinyltransferase (429 aa).

K23, S24, and R28 together coordinate 3-phosphoshikimate. Position 23 (K23) interacts with phosphoenolpyruvate. Phosphoenolpyruvate contacts are provided by G95 and R123. 3-phosphoshikimate is bound by residues S168, Q170, D316, and K343. Q170 contacts phosphoenolpyruvate. Residue D316 is the Proton acceptor of the active site. The phosphoenolpyruvate site is built by R347 and R389.

The protein belongs to the EPSP synthase family. Monomer.

It localises to the cytoplasm. The enzyme catalyses 3-phosphoshikimate + phosphoenolpyruvate = 5-O-(1-carboxyvinyl)-3-phosphoshikimate + phosphate. Its pathway is metabolic intermediate biosynthesis; chorismate biosynthesis; chorismate from D-erythrose 4-phosphate and phosphoenolpyruvate: step 6/7. Catalyzes the transfer of the enolpyruvyl moiety of phosphoenolpyruvate (PEP) to the 5-hydroxyl of shikimate-3-phosphate (S3P) to produce enolpyruvyl shikimate-3-phosphate and inorganic phosphate. The chain is 3-phosphoshikimate 1-carboxyvinyltransferase from Bacillus cereus (strain B4264).